Consider the following 82-residue polypeptide: uncharacterized protein (82 aa).

This is an uncharacterized protein from Orgyia pseudotsugata multicapsid polyhedrosis virus (OpMNPV).